Consider the following 520-residue polypeptide: Keratin, type II cytoskeletal 72 (520 aa).

The interval 1–133 (MSRQLTLYPG…DPEIQKVRAQ (133 aa)) is head. Residues 134 to 169 (EREQIKALNNKFASFIDKVRFLEQQNQVLETKWELL) form a coil 1A region. An IF rod domain is found at 134–447 (EREQIKALNN…KLLESEESRM (314 aa)). Residues 170–188 (QQLDQNNSRRSLEPVHESY) form a linker 1 region. The coil 1B stretch occupies residues 189–280 (ISNLQKQLEI…VLFEGEIAQM (92 aa)). Residues 281–304 (QSHISDTSVILSMDNNRQLDLDSI) form a linker 12 region. The segment at 305–443 (LAEVRAQYEE…ATYRKLLESE (139 aa)) is coil 2. The interval 444-520 (ESRMAGEYPS…SSCVSKKASR (77 aa)) is tail. The interval 495–520 (GSCGSELKDPPAKTSASSCVSKKASR) is disordered.

Belongs to the intermediate filament family. Heterotetramer of two type I and two type II keratins.

Functionally, has a role in hair formation. Specific component of keratin intermediate filaments in the inner root sheath (IRS) of the hair follicle. The polypeptide is Keratin, type II cytoskeletal 72 (Krt72) (Rattus norvegicus (Rat)).